Here is a 100-residue protein sequence, read N- to C-terminus: Large ribosomal subunit protein uL23 (100 aa).

This sequence belongs to the universal ribosomal protein uL23 family. Part of the 50S ribosomal subunit. Contacts protein L29, and trigger factor when it is bound to the ribosome.

Functionally, one of the early assembly proteins it binds 23S rRNA. One of the proteins that surrounds the polypeptide exit tunnel on the outside of the ribosome. Forms the main docking site for trigger factor binding to the ribosome. The protein is Large ribosomal subunit protein uL23 of Aggregatibacter actinomycetemcomitans (Actinobacillus actinomycetemcomitans).